A 274-amino-acid polypeptide reads, in one-letter code: 3-methyl-2-oxobutanoate hydroxymethyltransferase (274 aa).

The Mg(2+) site is built by Asp49 and Asp88. 3-methyl-2-oxobutanoate is bound by residues 49–50, Asp88, and Lys118; that span reads DS. Glu120 contributes to the Mg(2+) binding site. The Proton acceptor role is filled by Glu187.

It belongs to the PanB family. In terms of assembly, homodecamer; pentamer of dimers. Mg(2+) is required as a cofactor.

The protein localises to the cytoplasm. It carries out the reaction 3-methyl-2-oxobutanoate + (6R)-5,10-methylene-5,6,7,8-tetrahydrofolate + H2O = 2-dehydropantoate + (6S)-5,6,7,8-tetrahydrofolate. Its pathway is cofactor biosynthesis; (R)-pantothenate biosynthesis; (R)-pantoate from 3-methyl-2-oxobutanoate: step 1/2. Its function is as follows. Catalyzes the reversible reaction in which hydroxymethyl group from 5,10-methylenetetrahydrofolate is transferred onto alpha-ketoisovalerate to form ketopantoate. The sequence is that of 3-methyl-2-oxobutanoate hydroxymethyltransferase from Parvibaculum lavamentivorans (strain DS-1 / DSM 13023 / NCIMB 13966).